Here is a 487-residue protein sequence, read N- to C-terminus: Homoserine O-acetyltransferase (487 aa).

An AB hydrolase-1 domain is found at 45 to 352 (NVILVCHPLT…PHGHDGFLLE (308 aa)). Ser-150 acts as the Nucleophile in catalysis. Substrate is bound at residue Arg-219. Active-site residues include Asp-313 and His-346. A substrate-binding site is contributed by Asp-347. CBS domains follow at residues 373–430 (MTNN…FQDL) and 434–487 (MTKD…EVLQ).

The protein belongs to the AB hydrolase superfamily. MetX family. Homodimer.

Its subcellular location is the cytoplasm. The enzyme catalyses L-homoserine + acetyl-CoA = O-acetyl-L-homoserine + CoA. The protein operates within amino-acid biosynthesis; L-methionine biosynthesis via de novo pathway; O-acetyl-L-homoserine from L-homoserine: step 1/1. Transfers an acetyl group from acetyl-CoA to L-homoserine, forming acetyl-L-homoserine. This chain is Homoserine O-acetyltransferase, found in Methanocorpusculum labreanum (strain ATCC 43576 / DSM 4855 / Z).